Consider the following 150-residue polypeptide: UPF0735 ACT domain-containing protein Csac_0995 (150 aa).

The ACT domain occupies 72–147; the sequence is TLALVLQDVP…GVKKIEILGR (76 aa).

It belongs to the UPF0735 family.

The chain is UPF0735 ACT domain-containing protein Csac_0995 from Caldicellulosiruptor saccharolyticus (strain ATCC 43494 / DSM 8903 / Tp8T 6331).